A 224-amino-acid chain; its full sequence is 2-phospho-L-lactate guanylyltransferase (224 aa).

This sequence belongs to the CofC family. In terms of assembly, homodimer.

The catalysed reaction is (2S)-2-phospholactate + GTP + H(+) = (2S)-lactyl-2-diphospho-5'-guanosine + diphosphate. It functions in the pathway cofactor biosynthesis; coenzyme F420 biosynthesis. Functionally, guanylyltransferase that catalyzes the activation of (2S)-2-phospholactate (2-PL) as (2S)-lactyl-2-diphospho-5'-guanosine, via the condensation of 2-PL with GTP. It is involved in the biosynthesis of coenzyme F420, a hydride carrier cofactor. This is 2-phospho-L-lactate guanylyltransferase from Methanobrevibacter smithii (strain ATCC 35061 / DSM 861 / OCM 144 / PS).